Consider the following 274-residue polypeptide: DNA repair protein Rad1 (274 aa).

The protein belongs to the rad1 family. In terms of assembly, component of the 9-1-1 checkpoint clamp complex consisting of Rad9 isoform A, Rad1 and Hus1-like; the interaction with Hus1-like is direct. Does not interact directly with Rad9; this interaction is probably mediated by Hus1-like. This complex probably also forms with Rad9 isoform B, however 9-1-1 complex containing Rad9 isoform A localizes to the nuclear periphery. In terms of tissue distribution, expressed in ovary.

It is found in the cytoplasm. Its subcellular location is the nucleus. The protein localises to the nucleus envelope. In Drosophila melanogaster (Fruit fly), this protein is DNA repair protein Rad1.